We begin with the raw amino-acid sequence, 523 residues long: GMP synthase [glutamine-hydrolyzing] (523 aa).

The Glutamine amidotransferase type-1 domain maps to 8-205 (KILILDFGSQ…VVNICGCETK (198 aa)). The Nucleophile role is filled by C85. Active-site residues include H179 and E181. Positions 206 to 398 (WTAENIIEDA…LGLPAEMINR (193 aa)) constitute a GMPS ATP-PPase domain. 233-239 (SGGVDSS) lines the ATP pocket.

As to quaternary structure, homodimer.

The enzyme catalyses XMP + L-glutamine + ATP + H2O = GMP + L-glutamate + AMP + diphosphate + 2 H(+). The protein operates within purine metabolism; GMP biosynthesis; GMP from XMP (L-Gln route): step 1/1. Its function is as follows. Catalyzes the synthesis of GMP from XMP. The sequence is that of GMP synthase [glutamine-hydrolyzing] from Haemophilus influenzae (strain 86-028NP).